The following is a 263-amino-acid chain: Acetylglutamate kinase (263 aa).

Residues 49–50 (GG), Arg71, and Asn163 each bind substrate.

Belongs to the acetylglutamate kinase family. ArgB subfamily.

It localises to the cytoplasm. It carries out the reaction N-acetyl-L-glutamate + ATP = N-acetyl-L-glutamyl 5-phosphate + ADP. It functions in the pathway amino-acid biosynthesis; L-arginine biosynthesis; N(2)-acetyl-L-ornithine from L-glutamate: step 2/4. Functionally, catalyzes the ATP-dependent phosphorylation of N-acetyl-L-glutamate. In Moritella abyssi, this protein is Acetylglutamate kinase.